The primary structure comprises 353 residues: Nicotinate-nucleotide--dimethylbenzimidazole phosphoribosyltransferase (353 aa).

Glutamate 318 functions as the Proton acceptor in the catalytic mechanism.

Belongs to the CobT family.

It carries out the reaction 5,6-dimethylbenzimidazole + nicotinate beta-D-ribonucleotide = alpha-ribazole 5'-phosphate + nicotinate + H(+). Its pathway is nucleoside biosynthesis; alpha-ribazole biosynthesis; alpha-ribazole from 5,6-dimethylbenzimidazole: step 1/2. Its function is as follows. Catalyzes the synthesis of alpha-ribazole-5'-phosphate from nicotinate mononucleotide (NAMN) and 5,6-dimethylbenzimidazole (DMB). The chain is Nicotinate-nucleotide--dimethylbenzimidazole phosphoribosyltransferase from Desulforudis audaxviator (strain MP104C).